Here is a 283-residue protein sequence, read N- to C-terminus: NAD kinase (283 aa).

Asp73 serves as the catalytic Proton acceptor. NAD(+) contacts are provided by residues 73 to 74, 146 to 147, His157, His176, Asp178, 189 to 194, and Ala213; these read DG, NE, and TAYNLS.

The protein belongs to the NAD kinase family. A divalent metal cation is required as a cofactor.

The protein resides in the cytoplasm. It carries out the reaction NAD(+) + ATP = ADP + NADP(+) + H(+). In terms of biological role, involved in the regulation of the intracellular balance of NAD and NADP, and is a key enzyme in the biosynthesis of NADP. Catalyzes specifically the phosphorylation on 2'-hydroxyl of the adenosine moiety of NAD to yield NADP. The polypeptide is NAD kinase (Haloarcula marismortui (strain ATCC 43049 / DSM 3752 / JCM 8966 / VKM B-1809) (Halobacterium marismortui)).